We begin with the raw amino-acid sequence, 167 residues long: L-alanine exporter AlaE (167 aa).

The next 4 membrane-spanning stretches (helical) occupy residues glycine 25–isoleucine 45, isoleucine 50–isoleucine 70, phenylalanine 105–valine 125, and leucine 129–valine 149.

It belongs to the AlaE exporter family.

It is found in the cell inner membrane. Exports L-alanine. This Pantoea sp. (strain At-9b) protein is L-alanine exporter AlaE.